Here is a 355-residue protein sequence, read N- to C-terminus: Uroporphyrinogen decarboxylase (355 aa).

Substrate contacts are provided by residues 27-31 (RQAGR), aspartate 78, tyrosine 155, serine 210, and histidine 328.

It belongs to the uroporphyrinogen decarboxylase family. In terms of assembly, homodimer.

It localises to the cytoplasm. The catalysed reaction is uroporphyrinogen III + 4 H(+) = coproporphyrinogen III + 4 CO2. It participates in porphyrin-containing compound metabolism; protoporphyrin-IX biosynthesis; coproporphyrinogen-III from 5-aminolevulinate: step 4/4. In terms of biological role, catalyzes the decarboxylation of four acetate groups of uroporphyrinogen-III to yield coproporphyrinogen-III. This is Uroporphyrinogen decarboxylase from Pseudomonas aeruginosa (strain UCBPP-PA14).